Consider the following 141-residue polypeptide: Nucleoside diphosphate kinase (141 aa).

Positions 11, 59, 87, 93, 104, and 114 each coordinate ATP. His117 serves as the catalytic Pros-phosphohistidine intermediate.

It belongs to the NDK family. Homotetramer. The cofactor is Mg(2+).

The protein localises to the cytoplasm. It carries out the reaction a 2'-deoxyribonucleoside 5'-diphosphate + ATP = a 2'-deoxyribonucleoside 5'-triphosphate + ADP. The enzyme catalyses a ribonucleoside 5'-diphosphate + ATP = a ribonucleoside 5'-triphosphate + ADP. In terms of biological role, major role in the synthesis of nucleoside triphosphates other than ATP. The ATP gamma phosphate is transferred to the NDP beta phosphate via a ping-pong mechanism, using a phosphorylated active-site intermediate. The sequence is that of Nucleoside diphosphate kinase from Pseudomonas fluorescens (strain SBW25).